Consider the following 287-residue polypeptide: Stomatin-like protein 3 (287 aa).

S3 is subject to Phosphoserine. A helical; Signal-anchor for type III membrane protein membrane pass occupies residues 25–45 (WILFFLSFLLMLVTFPISVWM). Topologically, residues 46–287 (CLKIIKEYER…GNNKKVTAKA (242 aa)) are cytoplasmic. Phosphoserine is present on S237.

This sequence belongs to the band 7/mec-2 family. As to quaternary structure, homodimer. Interacts with PIEZO1 and PIEZO2. As to expression, expressed by all dorsal root ganglion neurons and is selectively expressed in neuronal tissues. Detected in olfactory epithelium.

Its subcellular location is the cell membrane. In terms of biological role, required for the function of many mechanoreceptors. Modulate mechanotransduction channels and acid-sensing ion channels (ASIC) proteins. Potentiates PIEZO1 and PIEZO2 function by increasing their sensitivity to mechanical stimulations. In Mus musculus (Mouse), this protein is Stomatin-like protein 3 (Stoml3).